A 464-amino-acid chain; its full sequence is Probable glycine dehydrogenase (decarboxylating) subunit 1 (464 aa).

This sequence belongs to the GcvP family. N-terminal subunit subfamily. As to quaternary structure, the glycine cleavage system is composed of four proteins: P, T, L and H. In this organism, the P 'protein' is a heterodimer of two subunits.

The enzyme catalyses N(6)-[(R)-lipoyl]-L-lysyl-[glycine-cleavage complex H protein] + glycine + H(+) = N(6)-[(R)-S(8)-aminomethyldihydrolipoyl]-L-lysyl-[glycine-cleavage complex H protein] + CO2. In terms of biological role, the glycine cleavage system catalyzes the degradation of glycine. The P protein binds the alpha-amino group of glycine through its pyridoxal phosphate cofactor; CO(2) is released and the remaining methylamine moiety is then transferred to the lipoamide cofactor of the H protein. In Thiobacillus denitrificans (strain ATCC 25259 / T1), this protein is Probable glycine dehydrogenase (decarboxylating) subunit 1.